The following is a 178-amino-acid chain: MASSMMVSTAAVSRTSPAQSNMVVPFAGLHSSAAFPVTRKFADSSKLPSNGLRVRCMQVWPPEGKKKFETLSYLPPLTREQLGQEVDYLIRNGWIPCIEFCKVGFVYREYHNSPGYYDGRYWTMWKLPMFGCTDSSQVLKEVDECSKAYPDYFNRIIGFDNTRQVQCISFLTYKPEGN.

Residues 1 to 55 (MASSMMVSTAAVSRTSPAQSNMVVPFAGLHSSAAFPVTRKFADSSKLPSNGLRVR) constitute a chloroplast transit peptide.

Belongs to the RuBisCO small chain family. In terms of assembly, heterohexadecamer of 8 large and 8 small subunits.

It is found in the plastid. The protein localises to the chloroplast. In terms of biological role, ruBisCO catalyzes two reactions: the carboxylation of D-ribulose 1,5-bisphosphate, the primary event in carbon dioxide fixation, as well as the oxidative fragmentation of the pentose substrate. Both reactions occur simultaneously and in competition at the same active site. Although the small subunit is not catalytic it is essential for maximal activity. The chain is Ribulose bisphosphate carboxylase small subunit, chloroplastic from Zantedeschia aethiopica (White calla lily).